We begin with the raw amino-acid sequence, 458 residues long: Bifunctional protein GlmU (458 aa).

Residues Met-1 to Arg-232 are pyrophosphorylase. Residues Leu-10–Gly-13, Lys-24, Gln-79, Gly-84–Thr-85, Tyr-106–Asp-108, Gly-142, Glu-157, Asn-172, and Asn-230 contribute to the UDP-N-acetyl-alpha-D-glucosamine site. Asp-108 lines the Mg(2+) pocket. Asn-230 lines the Mg(2+) pocket. Residues Gln-233 to Ala-253 form a linker region. Residues Gly-254–Lys-458 form an N-acetyltransferase region. UDP-N-acetyl-alpha-D-glucosamine is bound by residues Arg-336 and Lys-354. His-366 serves as the catalytic Proton acceptor. Positions 369 and 380 each coordinate UDP-N-acetyl-alpha-D-glucosamine. Residues Ala-383, Asn-389–Tyr-390, Ser-408, Ala-426, and Arg-443 contribute to the acetyl-CoA site.

In the N-terminal section; belongs to the N-acetylglucosamine-1-phosphate uridyltransferase family. This sequence in the C-terminal section; belongs to the transferase hexapeptide repeat family. As to quaternary structure, homotrimer. It depends on Mg(2+) as a cofactor.

It is found in the cytoplasm. It catalyses the reaction alpha-D-glucosamine 1-phosphate + acetyl-CoA = N-acetyl-alpha-D-glucosamine 1-phosphate + CoA + H(+). It carries out the reaction N-acetyl-alpha-D-glucosamine 1-phosphate + UTP + H(+) = UDP-N-acetyl-alpha-D-glucosamine + diphosphate. Its pathway is nucleotide-sugar biosynthesis; UDP-N-acetyl-alpha-D-glucosamine biosynthesis; N-acetyl-alpha-D-glucosamine 1-phosphate from alpha-D-glucosamine 6-phosphate (route II): step 2/2. It functions in the pathway nucleotide-sugar biosynthesis; UDP-N-acetyl-alpha-D-glucosamine biosynthesis; UDP-N-acetyl-alpha-D-glucosamine from N-acetyl-alpha-D-glucosamine 1-phosphate: step 1/1. The protein operates within bacterial outer membrane biogenesis; LPS lipid A biosynthesis. Catalyzes the last two sequential reactions in the de novo biosynthetic pathway for UDP-N-acetylglucosamine (UDP-GlcNAc). The C-terminal domain catalyzes the transfer of acetyl group from acetyl coenzyme A to glucosamine-1-phosphate (GlcN-1-P) to produce N-acetylglucosamine-1-phosphate (GlcNAc-1-P), which is converted into UDP-GlcNAc by the transfer of uridine 5-monophosphate (from uridine 5-triphosphate), a reaction catalyzed by the N-terminal domain. The sequence is that of Bifunctional protein GlmU from Psychrobacter cryohalolentis (strain ATCC BAA-1226 / DSM 17306 / VKM B-2378 / K5).